The chain runs to 290 residues: 4-hydroxy-tetrahydrodipicolinate synthase (290 aa).

Thr-45 contributes to the pyruvate binding site. Catalysis depends on Tyr-133, which acts as the Proton donor/acceptor. Lys-161 acts as the Schiff-base intermediate with substrate in catalysis. Ile-202 contributes to the pyruvate binding site.

Belongs to the DapA family. Homotetramer; dimer of dimers.

Its subcellular location is the cytoplasm. It catalyses the reaction L-aspartate 4-semialdehyde + pyruvate = (2S,4S)-4-hydroxy-2,3,4,5-tetrahydrodipicolinate + H2O + H(+). The protein operates within amino-acid biosynthesis; L-lysine biosynthesis via DAP pathway; (S)-tetrahydrodipicolinate from L-aspartate: step 3/4. Functionally, catalyzes the condensation of (S)-aspartate-beta-semialdehyde [(S)-ASA] and pyruvate to 4-hydroxy-tetrahydrodipicolinate (HTPA). This chain is 4-hydroxy-tetrahydrodipicolinate synthase, found in Alkalilimnicola ehrlichii (strain ATCC BAA-1101 / DSM 17681 / MLHE-1).